Here is a 261-residue protein sequence, read N- to C-terminus: UPF0328 protein ECU03_1620 (261 aa).

Belongs to the UPF0328 family.

This chain is UPF0328 protein ECU03_1620, found in Encephalitozoon cuniculi (strain GB-M1) (Microsporidian parasite).